A 104-amino-acid chain; its full sequence is Replication restart protein PriB (104 aa).

The 101-residue stretch at 1–101 folds into the SSB domain; sequence MTNRLVLSGT…LHAEQIDLID (101 aa).

It belongs to the PriB family. As to quaternary structure, homodimer. Interacts with PriA and DnaT. Component of the replication restart primosome. Primosome assembly occurs via a 'hand-off' mechanism. PriA binds to replication forks, subsequently PriB then DnaT bind; DnaT then displaces ssDNA to generate the helicase loading substrate.

Functionally, involved in the restart of stalled replication forks, which reloads the replicative helicase on sites other than the origin of replication; the PriA-PriB pathway is the major replication restart pathway. During primosome assembly it facilitates complex formation between PriA and DnaT on DNA; stabilizes PriA on DNA. Stimulates the DNA unwinding activity of PriA helicase. The chain is Replication restart protein PriB from Enterobacter sp. (strain 638).